Reading from the N-terminus, the 907-residue chain is MDYSLTVLLPKTDFPMKANLPQREPHWIEVWEKEKVYSTLLEKRKNCPQFILHDGPPFANGKAHMGSGLNKILKDIVLKSRNMLGFQCPYIPGWDCHGLPIEHKVMSEYPALAADPLSIRNKCKEYARYWIEIQKEQFRRLGILGSWDNPYITMDPGYEAAELRLFAELVEKKWVYRGLRPVFWSVGCRTALAEAEIEYQKKEDIAIYVEFPVGEEELKKAGLPQGTSFLAWTTTPWTLPANLALAVSPDLSYELRQVGGKKFIVAGKLAESIPGFSHSVVLLSFPSGQNLEGLKYNHPLLPREGVVYTADFVSGETGSGIVHIAPGHGMEDYQLGMVHGLEVYSPVDDQGRFTKQCGIEKIVGLSVFEANSILCAMLKEKGLLWAKYPYVHDYPFCWRSKTPIIFRSVPQWFIAIEAFKSLALKEIERVNWIPSRGENRIKGAVESRKDWCISRQRYWGVPIPAFYKKSGEAILDPSIIRRFADKVEEEGTDLWFRLESKELCQLLGLAPSEDLVKGLDTLDVWIDSGSSHYSVLKPRGEDPADLYLEGSDQHRGWFQSSLLLSVASKGKAPYKSVLTHGFVVDLDGKKLSKSSGARDLSEQIQTYGADLLRLWVASEEYAEDVPFSKEIFSRLSDSYRLIRNSLRILLGNLHDFNPQEQSLPDDRLREIDRYFELCVNKLVKKTKAFYENYEFSQVYQALTRFCSVELSSFYIDILKDRLYCDGQNWLSRRSAQTVLYRTFECLVKLLAPILPFTTEEAWRASGKTSSIHLELFPEEREIKEEEKLLKRWEKILQLRDLANRELEKARKQKMIGKNLEAKLILFTDDFEAEDTALLTEVFLVSQLEIIRSSKTEILVEKALGKKCPRCWKFSLFAQSNSDPQYPHVCPRCLKVLKGLPESFLVSD.

The short motif at 57–67 is the 'HIGH' region element; that stretch reads PFANGKAHMGS. Residue Glu-549 participates in L-isoleucyl-5'-AMP binding. The short motif at 590–594 is the 'KMSKS' region element; it reads KLSKS. An ATP-binding site is contributed by Lys-593. Zn(2+)-binding residues include Cys-867, Cys-870, Cys-889, and Cys-892.

This sequence belongs to the class-I aminoacyl-tRNA synthetase family. IleS type 1 subfamily. In terms of assembly, monomer. Requires Zn(2+) as cofactor.

It localises to the cytoplasm. It carries out the reaction tRNA(Ile) + L-isoleucine + ATP = L-isoleucyl-tRNA(Ile) + AMP + diphosphate. Catalyzes the attachment of isoleucine to tRNA(Ile). As IleRS can inadvertently accommodate and process structurally similar amino acids such as valine, to avoid such errors it has two additional distinct tRNA(Ile)-dependent editing activities. One activity is designated as 'pretransfer' editing and involves the hydrolysis of activated Val-AMP. The other activity is designated 'posttransfer' editing and involves deacylation of mischarged Val-tRNA(Ile). The polypeptide is Isoleucine--tRNA ligase (Methylacidiphilum infernorum (isolate V4) (Methylokorus infernorum (strain V4))).